A 160-amino-acid polypeptide reads, in one-letter code: Large ribosomal subunit protein uL30m (160 aa).

The transit peptide at 1-34 (MAGVLRSVFQRPPGRLQTVKKGAESLIGTEWIRH) directs the protein to the mitochondrion. Residues 45-64 (VFQPRPEDHEKYGGDPQNPH) are disordered.

Belongs to the universal ribosomal protein uL30 family. As to quaternary structure, component of the mitochondrial ribosome large subunit (39S) which comprises a 16S rRNA and about 50 distinct proteins.

It is found in the mitochondrion. This chain is Large ribosomal subunit protein uL30m (Mrpl30), found in Rattus norvegicus (Rat).